Reading from the N-terminus, the 278-residue chain is Diaminopimelate epimerase (278 aa).

Residues asparagine 13, glutamine 46, and asparagine 67 each coordinate substrate. Cysteine 76 serves as the catalytic Proton donor. Residues 77-78 (GN), asparagine 160, asparagine 193, and 211-212 (ER) each bind substrate. Cysteine 220 serves as the catalytic Proton acceptor. Substrate is bound at residue 221 to 222 (GT).

This sequence belongs to the diaminopimelate epimerase family. Homodimer.

It is found in the cytoplasm. It carries out the reaction (2S,6S)-2,6-diaminopimelate = meso-2,6-diaminopimelate. It functions in the pathway amino-acid biosynthesis; L-lysine biosynthesis via DAP pathway; DL-2,6-diaminopimelate from LL-2,6-diaminopimelate: step 1/1. Functionally, catalyzes the stereoinversion of LL-2,6-diaminopimelate (L,L-DAP) to meso-diaminopimelate (meso-DAP), a precursor of L-lysine and an essential component of the bacterial peptidoglycan. The sequence is that of Diaminopimelate epimerase from Thioalkalivibrio sulfidiphilus (strain HL-EbGR7).